An 834-amino-acid polypeptide reads, in one-letter code: DNA-directed RNA polymerase subunit beta' (834 aa).

Over residues M1–P22 the composition is skewed to polar residues. Positions M1–G45 are disordered. The span at V26 to G36 shows a compositional bias: basic and acidic residues. Zn(2+)-binding residues include C101, C103, C118, and C121. Mg(2+)-binding residues include D606, D608, and D610.

It belongs to the RNA polymerase beta' chain family. RpoC1 subfamily. In terms of assembly, in plastids the minimal PEP RNA polymerase catalytic core is composed of four subunits: alpha, beta, beta', and beta''. When a (nuclear-encoded) sigma factor is associated with the core the holoenzyme is formed, which can initiate transcription. It depends on Mg(2+) as a cofactor. The cofactor is Zn(2+).

The protein localises to the plastid. Its subcellular location is the chloroplast. It carries out the reaction RNA(n) + a ribonucleoside 5'-triphosphate = RNA(n+1) + diphosphate. Functionally, DNA-dependent RNA polymerase catalyzes the transcription of DNA into RNA using the four ribonucleoside triphosphates as substrates. This is DNA-directed RNA polymerase subunit beta' from Staurastrum punctulatum (Green alga).